A 452-amino-acid polypeptide reads, in one-letter code: MCGVRRGMGVLLLFCAVALCAMPFVVRSVWGKVYIDIDSPAFQKIPIAVADFAPLNGNQGHADLSSWFPGAVRKTLDLTGYFNILNRTGGPRDQSQTGAVQAQAAYGEWRSLGAEYLIQGGFSSRGTQLVAEFRLIDIVQGRQLMGKQYTGGFEDRRDMVIRFVQEVLSLLTGGEGFFDTRIAFVVRQGRSSSLHTVGFGSQIDGRDLARVAGSPSLILSPRWSPDGRYLAFSSYRDGKPDIFVVSPSGSGLKKIVSFQGLNLPGAWSPDGRSLLLTLSKDGNEEIYVMDVRSGQVRRLTRNSAIDVSPVWSPDGRRIAFVSNISGSPQIYVMNADGGDVRRLTYSGNYNTTPAWSPRGGKIAYEGKVGSGYQIFSIDEDGGNVRQLTSGAGDHEFPSWSPDGRFLTFSLRSGGRSRINILNANTLEVRTLYESTDRCLGPAWSPRLKQALR.

The N-terminal stretch at 1–31 (MCGVRRGMGVLLLFCAVALCAMPFVVRSVWG) is a signal peptide.

This sequence belongs to the TolB family. As to quaternary structure, the Tol-Pal system is composed of five core proteins: the inner membrane proteins TolA, TolQ and TolR, the periplasmic protein TolB and the outer membrane protein Pal. They form a network linking the inner and outer membranes and the peptidoglycan layer.

The protein resides in the periplasm. Functionally, part of the Tol-Pal system, which plays a role in outer membrane invagination during cell division and is important for maintaining outer membrane integrity. The protein is Tol-Pal system protein TolB of Syntrophus aciditrophicus (strain SB).